The primary structure comprises 116 residues: MSLKLACVVVLCMVVGAPLAQGAVTSGQVTNSLAPCINYLRGSGAGAVPPGCCTGIKSLNSAAQTTPVRQAACRCIKSAAAGITGINFGLASGLPGKCGVNIPYKISPSTDCNSVK.

The N-terminal stretch at 1–22 (MSLKLACVVVLCMVVGAPLAQG) is a signal peptide. Intrachain disulfides connect Cys-36–Cys-52, Cys-53–Cys-98, and Cys-73–Cys-112.

The protein belongs to the plant LTP family.

In terms of biological role, plant non-specific lipid-transfer proteins transfer phospholipids as well as galactolipids across membranes. May play a role in wax or cutin deposition in the cell walls of expanding epidermal cells and certain secretory tissues. This Gossypium hirsutum (Upland cotton) protein is Non-specific lipid-transfer protein.